The following is a 293-amino-acid chain: MPWIQLKLNTTGANAEELSDALMEAGAVSITFQDTHDTPVFEPLPGETRLWGDTDVIGLFDAETDMKDVVAILEQHPLLGAGFAHKIEQLEDKDWEREWMDNFHPMRFGERLWICPSWRDIPDENAVNVMLDPGLAFGTGTHPTTSLCLQWLDGLDLNGKTVIDFGCGSGILAIAALKLGAAKAIGIDIDPQAIQASRDNAERNGVSDRLELYLPKDQPEAMKADVVVANILAGPLRELAPLISVLPVEGGLLGLSGILASQAESVCDAYAELFTLDPVVEKEEWCRITGRKK.

Residues threonine 145, glycine 166, aspartate 188, and asparagine 230 each coordinate S-adenosyl-L-methionine.

Belongs to the methyltransferase superfamily. PrmA family.

The protein localises to the cytoplasm. It carries out the reaction L-lysyl-[protein] + 3 S-adenosyl-L-methionine = N(6),N(6),N(6)-trimethyl-L-lysyl-[protein] + 3 S-adenosyl-L-homocysteine + 3 H(+). In terms of biological role, methylates ribosomal protein L11. The polypeptide is Ribosomal protein L11 methyltransferase (Salmonella agona (strain SL483)).